A 110-amino-acid chain; its full sequence is Chelonianin (110 aa).

Position 1 is a pyrrolidone carboxylic acid (Gln-1). The 51-residue stretch at 8 to 58 (CRLPPEQGPCKGRIPRYFYNPASRMCESFIYGGCKGNKNNFKTKAECVRAC) folds into the BPTI/Kunitz inhibitor domain. Intrachain disulfides connect Cys-8-Cys-58, Cys-17-Cys-41, Cys-33-Cys-54, Cys-67-Cys-92, Cys-76-Cys-97, Cys-80-Cys-93, and Cys-86-Cys-101. The WAP domain maps to 60–105 (PPERPGVCPKTSGPGICLHGCDSDSDCKEGQKCCFDGCGYICLTVA).

Its function is as follows. The first domain inhibits trypsin; the second one inhibitis subtilisin. In Caretta caretta (Loggerhead sea turtle), this protein is Chelonianin.